Here is an 85-residue protein sequence, read N- to C-terminus: MTNIGSLLVDAATLMVTGMAVVFIFLTILVYLVRLLSKLVPEEVPEPIAAPKTNTRVQSTSSAVSPQVVAAISAAIHQHRASIAK.

The helical transmembrane segment at 11-33 (AATLMVTGMAVVFIFLTILVYLV) threads the bilayer.

This sequence belongs to the OadG family. Heterotrimer of an alpha, a beta and a gamma subunit. It depends on Na(+) as a cofactor.

Its subcellular location is the cell membrane. It carries out the reaction oxaloacetate + 2 Na(+)(in) + H(+) = pyruvate + 2 Na(+)(out) + CO2. In terms of biological role, catalyzes the decarboxylation of oxaloacetate coupled to Na(+) translocation. This Vibrio parahaemolyticus serotype O3:K6 (strain RIMD 2210633) protein is Probable oxaloacetate decarboxylase gamma chain.